The following is a 152-amino-acid chain: S-Adenosylmethionine lyase (152 aa).

As to quaternary structure, homotetramer. Interacts with host METK; this interaction induces the polymerization of METK into filaments that are enzymatically inactive.

It catalyses the reaction S-adenosyl-L-methionine = L-homoserine lactone + S-methyl-5'-thioadenosine. In terms of biological role, degrades the intracellular SAM pools of the host cell and inhibits the host S-adenosylmethionine synthase METK/MAT, thereby preventing methylation of the viral genome. Induces the polymerization of METK into filaments that are enzymatically inactive. Keeping the viral genome in an unmethylated state allows the phage to shift from a lytic infection under normal growth conditions to a transient lysogenic infection under glucose starvation, by blocking its own expression. Does not protect the virus immune against host restriction-modification systems. In Escherichia coli (Bacteriophage T3), this protein is S-Adenosylmethionine lyase.